Here is a 468-residue protein sequence, read N- to C-terminus: RuvB-like helicase 2 (468 aa).

Gly76–Thr83 serves as a coordination point for ATP.

The protein belongs to the RuvB family. In terms of assembly, may form heterododecamers with RVB1. Component of the SWR1 chromatin remodeling complex, the INO80 chromatin remodeling complex, and of the R2TP complex.

It is found in the nucleus. It catalyses the reaction ATP + H2O = ADP + phosphate + H(+). In terms of biological role, DNA helicase which participates in several chromatin remodeling complexes, including the SWR1 and the INO80 complexes. The SWR1 complex mediates the ATP-dependent exchange of histone H2A for the H2A variant HZT1 leading to transcriptional regulation of selected genes by chromatin remodeling. The INO80 complex remodels chromatin by shifting nucleosomes and is involved in DNA repair. Also involved in pre-rRNA processing. This chain is RuvB-like helicase 2 (rvb2), found in Emericella nidulans (strain FGSC A4 / ATCC 38163 / CBS 112.46 / NRRL 194 / M139) (Aspergillus nidulans).